The following is a 131-amino-acid chain: Small ribosomal subunit protein bS6 (131 aa).

Positions 99-131 (ASPMVKAKDERRERREDFATETNEDSDAGDSEE) are disordered. The segment covering 104 to 116 (KAKDERRERREDF) has biased composition (basic and acidic residues). The span at 120–131 (TNEDSDAGDSEE) shows a compositional bias: acidic residues.

This sequence belongs to the bacterial ribosomal protein bS6 family.

Binds together with bS18 to 16S ribosomal RNA. In Sodalis glossinidius (strain morsitans), this protein is Small ribosomal subunit protein bS6.